Here is a 218-residue protein sequence, read N- to C-terminus: UPF0177 protein YaiF (218 aa).

5 helical membrane passes run 8–28 (SIIIATAFFLFILSQLPAVFL), 48–68 (FIILTLVVVTICIFIGIKCGF), 81–101 (ILLIFSLLIITFFIQKFVVQF), 123–143 (ILSSLLFPGQFVAVSILAPIL), and 163–183 (FFLSCFFFSYVHSGFSWDILG).

This sequence belongs to the UPF0177 family.

It localises to the cell membrane. The sequence is that of UPF0177 protein YaiF (yaiF) from Lactococcus lactis subsp. lactis (strain IL1403) (Streptococcus lactis).